A 728-amino-acid polypeptide reads, in one-letter code: MSWFADLAGRAEDLLNRVDQGAATALRKESTSNTFYSKNTDYPELHQQNTDSTYHTGQKANYISSAADNIRHQKATIIAGTANVKVGSRTGGDASHPTEHASVPRPSSHFVRRKKSEPDDELLFDFLNSSQKEPTGRVEIKKEKGKAPVLPSSQSSAVSSVTTSVTTIKATEENSGSQSPEVSSSDSMPEGHKKSTEESTVSNAISVEHSSVPSDGSMSHELSNLRLENQLLRNEVQSLNQEMASLLQRSKETQEELNEARVRVEKWNVDNSKSDRITRELRAQVDDLTEAVAAKDSQLAVLKVRLQEADQVLSSRTEALEALQSEKSRIMQDHNEGSSLQNQALQTLQERHEADATLKREQESYKQMQSEFATRLNKMEVERQNLAEAVTLAERKYSEERKKVDDLQQQVKLHRSSLESAKQELVDYKQKATRILQSKEKLINSLKEGSSFEGLDSSTASSMELEELRHERELQKEEIQKLMGQIHQLRSELQDMEAQQVSEAESAREQLQDLQDQIAKQRASKQELETELDRMKQEFHYVEEDLHRTKNTLQSRIKDREEEIQKLRNQLTNKTLSNSSQSELESRLHQLTETLIQKQTLLESLSTEKNSLVFQLERLEQQLHSAATGPSSGSSINMSGVDSGEGTRLRNVPVLFNDTETNLAGMYGKVRKAASSIDQFSIRLGIFLRRYPIARVFVIIYMALLHLWVMIVLLTYSPEMHHDQPYGK.

Ser-2 is modified (N-acetylserine). Over 2-695 (SWFADLAGRA…IFLRRYPIAR (694 aa)) the chain is Cytoplasmic. 2 positions are modified to dimethylated arginine: Arg-27 and Arg-89. The segment at 88 to 202 (SRTGGDASHP…KKSTEESTVS (115 aa)) is disordered. The residue at position 116 (Ser-116) is a Phosphoserine. Positions 134-146 (PTGRVEIKKEKGK) are enriched in basic and acidic residues. Residues 152–167 (SSQSSAVSSVTTSVTT) are compositionally biased toward low complexity. Residues 173 to 187 (ENSGSQSPEVSSSDS) are compositionally biased toward polar residues. Residues 216 to 628 (GSMSHELSNL…LEQQLHSAAT (413 aa)) are a coiled coil. The chain crosses the membrane as a helical; Anchor for type IV membrane protein span at residues 696–716 (VFVIIYMALLHLWVMIVLLTY). At 717–728 (SPEMHHDQPYGK) the chain is on the lumenal side.

As to quaternary structure, homodimer. Interacts with RAB1A that has been activated by GTP-binding. Interacts with isoform CASP of CUX1. Highly phosphorylated during mitosis. Phosphorylation is barely detectable during interphase.

It localises to the golgi apparatus membrane. Its function is as follows. Involved in maintaining Golgi structure. Stimulates the formation of Golgi stacks and ribbons. Involved in intra-Golgi retrograde transport. The sequence is that of Golgin subfamily A member 5 (Golga5) from Rattus norvegicus (Rat).